Reading from the N-terminus, the 39-residue chain is Mu-theraphotoxin-Ae1a (39 aa).

Disulfide bonds link Cys-7-Cys-21, Cys-14-Cys-26, and Cys-20-Cys-33. Position 39 is a phenylalanine amide (Phe-39).

It belongs to the neurotoxin 10 (Hwtx-1) family. 47 subfamily. As to expression, expressed by the venom gland.

It is found in the secreted. Its function is as follows. Insecticidal toxin that acts, at least partially, by inhibiting insect voltage-gated sodium (NaV) channels of several insect species. The toxin binds to the voltage sensor in NaV channel domain II and inhibits channel opening by shifting the threshold for channel activation to more positive voltages. The toxin binding is sensitive to residues in the S1-S2 loop of the domain II voltage sensor. In vivo, the recombinant toxin causes paralysis and/or death to two dipteran species (Lucilia cuprina and Drosophila melanogaster). In contrast, the toxin does not show paralytic or lethal effect on the cotton bollworm Helicoverpa armigera and the triatomine bug Rhodinius prolixus. The chain is Mu-theraphotoxin-Ae1a from Augacephalus ezendami (Mozambique baboon spider).